We begin with the raw amino-acid sequence, 211 residues long: Large ribosomal subunit protein bL9 (211 aa).

Residues 180 to 211 (DDIGAAGMDDDDDDAPAPAQADPSSEESSEED) are disordered.

This sequence belongs to the bacterial ribosomal protein bL9 family.

Its function is as follows. Binds to the 23S rRNA. This is Large ribosomal subunit protein bL9 from Jannaschia sp. (strain CCS1).